Reading from the N-terminus, the 549-residue chain is Tight junction-associated protein 1 (549 aa).

A disordered region spans residues 1-34 (MSSAAPAKKPYRKAPPEHRELRLEIPVSRLEQEE). A compositionally biased stretch (basic and acidic residues) spans 14–23 (APPEHRELRL). Residues 42–171 (MKLLQQENEE…EELNERYRLD (130 aa)) adopt a coiled-coil conformation. 2 disordered regions span residues 207-226 (RSGQEVASPSPSPSSSLSPG) and 266-322 (VDMS…PLYP). Ser295 is modified (phosphoserine). The segment covering 311–320 (YPTPSPPHPL) has biased composition (pro residues). A Phosphothreonine modification is found at Thr313. Phosphoserine occurs at positions 315 and 340. Disordered stretches follow at residues 359–404 (EDGS…SEED), 410–429 (QRAFVDRTPPPAAVVQRTAF), and 434–549 (LPEL…TVLS). The span at 369–383 (SVPSSPASAQGSPHH) shows a compositional bias: polar residues. Positions 389 to 400 (PSALSAPASSAS) are enriched in low complexity. Residue Thr417 is modified to Phosphothreonine. A Phosphoserine modification is found at Ser483. Positions 485-498 (EEERQSLLPDKEGT) are enriched in basic and acidic residues. A compositionally biased stretch (basic residues) spans 522 to 534 (RSPKRMGVHHLHR). Ser537 is modified (phosphoserine). A compositionally biased stretch (polar residues) spans 538–549 (LTQAQEQGTVLS).

As to quaternary structure, interacts with DLG1. Interacts with ARF6 (GTP-bound form). As to expression, widely expressed including in adult thymus, heart, lung, liver, small intestine, kidney, spleen, testis and skeletal muscle and in embryonic brain but not detected in adult brain (at protein level).

It is found in the golgi apparatus. Its subcellular location is the trans-Golgi network. The protein localises to the cell junction. It localises to the tight junction. The protein resides in the cell membrane. Plays a role in regulating the structure of the Golgi apparatus. This is Tight junction-associated protein 1 from Mus musculus (Mouse).